The following is a 152-amino-acid chain: MSEEKLSTNTCEIVCQSKDDTKKSILSIKLMEEIVNSLVKAHLKFASKALGDDEKIVVFVPPEIWNTVKKLPVIPQEGNSEEKGKWRVRKDEENTYFLSESLQSSSLDSEAFQLFKSVANDDDIQIPDLEKKLVEENGFVILNQHLDVSALF.

This is an uncharacterized protein from Acheta domesticus (House cricket).